A 248-amino-acid polypeptide reads, in one-letter code: NADH dehydrogenase [ubiquinone] flavoprotein 2, mitochondrial (248 aa).

The N-terminal 31 residues, 1–31 (MFSLALRARATGLAAQWGRHARNLHKTAVHN), are a transit peptide targeting the mitochondrion. At Lys-60 the chain carries N6-acetyllysine. [2Fe-2S] cluster contacts are provided by Cys-134, Cys-139, Cys-175, and Cys-179. Phosphotyrosine; by SRC is present on Tyr-192. Positions 229–248 (GLTSLTEPPKGPGFGVQAGL) are disordered.

This sequence belongs to the complex I 24 kDa subunit family. As to quaternary structure, core subunit of respiratory chain NADH dehydrogenase (Complex I) which is composed of 45 different subunits. This is a component of the flavoprotein-sulfur (FP) fragment of the enzyme. [2Fe-2S] cluster serves as cofactor.

Its subcellular location is the mitochondrion inner membrane. The catalysed reaction is a ubiquinone + NADH + 5 H(+)(in) = a ubiquinol + NAD(+) + 4 H(+)(out). Core subunit of the mitochondrial membrane respiratory chain NADH dehydrogenase (Complex I) which catalyzes electron transfer from NADH through the respiratory chain, using ubiquinone as an electron acceptor. Parts of the peripheral arm of the enzyme, where the electrons from NADH are accepted by flavin mononucleotide (FMN) and then passed along a chain of iron-sulfur clusters by electron tunnelling to the final acceptor ubiquinone. Contains one iron-sulfur cluster. The polypeptide is NADH dehydrogenase [ubiquinone] flavoprotein 2, mitochondrial (Mus musculus (Mouse)).